The chain runs to 320 residues: Reticulocalbin-2 (320 aa).

The first 25 residues, 1–25, serve as a signal peptide directing secretion; that stretch reads MRLGPRPAVLGLLLLLLLYAAVAGA. 2 EF-hand domains span residues 64-99 and 100-135; these read EQQRRLQSIIKKIDSDSDGFLTENELSQWIQMSFKH and YAMQEAKQQFVEYDKNSDGTVTWDEYNVQMYDRVID. Residues aspartate 77, aspartate 79, aspartate 81, glutamate 88, aspartate 113, asparagine 115, aspartate 117, threonine 119, and glutamate 124 each coordinate Ca(2+). Threonine 140 carries the phosphothreonine modification. EF-hand domains are found at residues 150–185, 189–224, 230–265, and 266–301; these read FRQLHLKDKKRFEKANQDSGPGLNLEEFIAFEHPEE, MTEFVIQEALEEHDKNGDGFVSLEEFLGDYRRDPTA, WILVEKDRFVNDYDKDSDGRLDPQELLSWVVPNNQG, and IAQEEALHLIDEMDLNSDKKLSEEEILENQDLFLTS. Positions 167, 176, 202, 204, 206, 213, 243, 245, 247, 249, 254, 279, 281, 283, 285, and 290 each coordinate Ca(2+). The Prevents secretion from ER signature appears at 317 to 320; sequence HDEL.

Belongs to the CREC family. In terms of assembly, binds the snake venom phospholipase complex taipoxin. In terms of tissue distribution, ubiquitous.

It localises to the endoplasmic reticulum lumen. Not known. Binds calcium. The chain is Reticulocalbin-2 (Rcn2) from Rattus norvegicus (Rat).